The primary structure comprises 32 residues: Chaperone protein DnaK (32 aa).

Belongs to the heat shock protein 70 family.

Functionally, acts as a chaperone. The sequence is that of Chaperone protein DnaK from Anabaena sp. (strain L31).